The following is a 187-amino-acid chain: Protein McbG (187 aa).

Belongs to the pentapeptide repeat protein family.

In terms of biological role, together with proteins McbE and McbF this protein causes immunity to the peptide antibiotic microcin B17 (MccB17), which inhibits DNA replication in Enterobacteriaceae by induction of the SOS repair system. McbG alone can provide some protection. In Escherichia coli, this protein is Protein McbG (mcbG).